Here is a 217-residue protein sequence, read N- to C-terminus: GTPase IMAP family member GIMD1 (217 aa).

Positions 6-217 (KMIINLALFG…ENCYQVLTFK (212 aa)) constitute an AIG1-type G domain. Residues 15–23 (GMTQSGKSS), serine 36, and 148–150 (HAE) contribute to the GTP site.

This sequence belongs to the TRAFAC class TrmE-Era-EngA-EngB-Septin-like GTPase superfamily. AIG1/Toc34/Toc159-like paraseptin GTPase family. IAN subfamily.

The sequence is that of GTPase IMAP family member GIMD1 (GIMD1) from Homo sapiens (Human).